Reading from the N-terminus, the 379-residue chain is MINLLDFNKTELVRFCGEMGEKPYRARQLLRWVHQSGKTDFMEMSDLAKGFRHKLMECAVVQLPEIVSDHTAGDGTRKWLLSTGAGNAVEMVFIPEPSRGTLCVSSQVGCALACSFCSTGRQGFNRNLSVAEIIGQLWWANRLLEAGSHDPFPLDTTRVQTDKPETRRPVTNVVMMGMGEPLANFENLVTALDLMLSDDAYGLSRRRVTVSTSGLVPALDRLRERCPVALAVSLHAPNDALRDQLVPINKKYPIRDLLAACERYLPAAPRDFITFEYVMLKGVNDSVALARELVQLVRNVPCKLNLIPFNAFSGSGYERSGAEAIGNFRDVLMQAGIVTTVRKTRGDDIAAACGQLAGQVRDKTRRTSGCGTGQPAVAR.

E90 functions as the Proton acceptor in the catalytic mechanism. The region spanning 96–348 (EPSRGTLCVS…TTVRKTRGDD (253 aa)) is the Radical SAM core domain. Cysteines 103 and 353 form a disulfide. Residues C110, C114, and C117 each coordinate [4Fe-4S] cluster. Residues 179-180 (GE), S211, 233-235 (SLH), and N310 each bind S-adenosyl-L-methionine. The active-site S-methylcysteine intermediate is the C353.

It belongs to the radical SAM superfamily. RlmN family. Requires [4Fe-4S] cluster as cofactor.

Its subcellular location is the cytoplasm. It catalyses the reaction adenosine(2503) in 23S rRNA + 2 reduced [2Fe-2S]-[ferredoxin] + 2 S-adenosyl-L-methionine = 2-methyladenosine(2503) in 23S rRNA + 5'-deoxyadenosine + L-methionine + 2 oxidized [2Fe-2S]-[ferredoxin] + S-adenosyl-L-homocysteine. The enzyme catalyses adenosine(37) in tRNA + 2 reduced [2Fe-2S]-[ferredoxin] + 2 S-adenosyl-L-methionine = 2-methyladenosine(37) in tRNA + 5'-deoxyadenosine + L-methionine + 2 oxidized [2Fe-2S]-[ferredoxin] + S-adenosyl-L-homocysteine. Its function is as follows. Specifically methylates position 2 of adenine 2503 in 23S rRNA and position 2 of adenine 37 in tRNAs. m2A2503 modification seems to play a crucial role in the proofreading step occurring at the peptidyl transferase center and thus would serve to optimize ribosomal fidelity. The chain is Dual-specificity RNA methyltransferase RlmN from Nitrosomonas europaea (strain ATCC 19718 / CIP 103999 / KCTC 2705 / NBRC 14298).